The following is a 293-amino-acid chain: MSTPSIDRGFKADVLASALPWLKQLHGKIVVVKYGGNAMTDDVLKAAFAADMVFLRNCGIHPVVVHGGGPQISAMLKRLGIEGDFKGGFRVTTPEVLDVARMVLFGQVGRELVNLINAHGPYAVGVTGEDAQLFTAVRRNVTVDGVATDIGLVGDVEHVNAGSLLDLIAAGRIPVVSTIAPDADGVVHNINADTAAAALAEALGAEKLVMLTDVEGLYTDWPDRTSLVSEIDTGALTQLLPKLESGMVPKIEACLRAVNGGVPSAHVIDGRVEHCVLVELFTDEGTGTKVVAQ.

Substrate is bound by residues 68 to 69 (GG), arginine 90, and asparagine 189.

It belongs to the acetylglutamate kinase family. ArgB subfamily.

Its subcellular location is the cytoplasm. It carries out the reaction N-acetyl-L-glutamate + ATP = N-acetyl-L-glutamyl 5-phosphate + ADP. The protein operates within amino-acid biosynthesis; L-arginine biosynthesis; N(2)-acetyl-L-ornithine from L-glutamate: step 2/4. Its function is as follows. Catalyzes the ATP-dependent phosphorylation of N-acetyl-L-glutamate. This is Acetylglutamate kinase from Mycolicibacterium smegmatis (strain ATCC 700084 / mc(2)155) (Mycobacterium smegmatis).